A 24-amino-acid chain; its full sequence is Ascaphin-4 (24 aa).

In terms of tissue distribution, expressed by the skin glands.

The protein localises to the secreted. Functionally, antimicrobial peptide that shows higher potency against Gram-negative bacteria than against Gram-positive bacteria. Has a very week hemolytic activity. In Ascaphus truei (Coastal tailed frog), this protein is Ascaphin-4.